We begin with the raw amino-acid sequence, 492 residues long: Ethanolamine-phosphate phospho-lyase (492 aa).

K280 carries the N6-(pyridoxal phosphate)lysine modification. Residues 462 to 492 are disordered; sequence ASDENGLVHPSNGNSHKHTSTIPLSKKTKRN.

The protein belongs to the class-III pyridoxal-phosphate-dependent aminotransferase family. In terms of assembly, homotetramer. The cofactor is pyridoxal 5'-phosphate.

The protein localises to the mitochondrion. It catalyses the reaction phosphoethanolamine + H2O = acetaldehyde + NH4(+) + phosphate. Catalyzes the pyridoxal-phosphate-dependent breakdown of phosphoethanolamine, converting it to ammonia, inorganic phosphate and acetaldehyde. This chain is Ethanolamine-phosphate phospho-lyase (etnppl), found in Danio rerio (Zebrafish).